We begin with the raw amino-acid sequence, 172 residues long: Peptide methionine sulfoxide reductase MsrA 1 (172 aa).

Cysteine 14 is an active-site residue.

This sequence belongs to the MsrA Met sulfoxide reductase family.

The enzyme catalyses L-methionyl-[protein] + [thioredoxin]-disulfide + H2O = L-methionyl-(S)-S-oxide-[protein] + [thioredoxin]-dithiol. It catalyses the reaction [thioredoxin]-disulfide + L-methionine + H2O = L-methionine (S)-S-oxide + [thioredoxin]-dithiol. Its function is as follows. Has an important function as a repair enzyme for proteins that have been inactivated by oxidation. Catalyzes the reversible oxidation-reduction of methionine sulfoxide in proteins to methionine. In Mesorhizobium japonicum (strain LMG 29417 / CECT 9101 / MAFF 303099) (Mesorhizobium loti (strain MAFF 303099)), this protein is Peptide methionine sulfoxide reductase MsrA 1 (msrA1).